We begin with the raw amino-acid sequence, 231 residues long: Biosynthetic peptidoglycan transglycosylase (231 aa).

The helical transmembrane segment at 12-34 threads the bilayer; the sequence is AAVLAGLALLLVALAVSYRWVPP.

The protein belongs to the glycosyltransferase 51 family.

Its subcellular location is the cell inner membrane. The catalysed reaction is [GlcNAc-(1-&gt;4)-Mur2Ac(oyl-L-Ala-gamma-D-Glu-L-Lys-D-Ala-D-Ala)](n)-di-trans,octa-cis-undecaprenyl diphosphate + beta-D-GlcNAc-(1-&gt;4)-Mur2Ac(oyl-L-Ala-gamma-D-Glu-L-Lys-D-Ala-D-Ala)-di-trans,octa-cis-undecaprenyl diphosphate = [GlcNAc-(1-&gt;4)-Mur2Ac(oyl-L-Ala-gamma-D-Glu-L-Lys-D-Ala-D-Ala)](n+1)-di-trans,octa-cis-undecaprenyl diphosphate + di-trans,octa-cis-undecaprenyl diphosphate + H(+). It functions in the pathway cell wall biogenesis; peptidoglycan biosynthesis. Its function is as follows. Peptidoglycan polymerase that catalyzes glycan chain elongation from lipid-linked precursors. In Rhodospirillum centenum (strain ATCC 51521 / SW), this protein is Biosynthetic peptidoglycan transglycosylase.